Here is a 268-residue protein sequence, read N- to C-terminus: Cytolethal distending toxin subunit A (268 aa).

Positions 1-19 (MQKIIVFILCCFMTFFLYA) are cleaved as a signal peptide. Cysteine 20 is lipidated: N-palmitoyl cysteine. Cysteine 20 carries S-diacylglycerol cysteine lipidation. One can recognise a Ricin B-type lectin domain in the interval 112-252 (VSDFLTILGP…DNFDQQWFLT (141 aa)). The mediates binding to target cells stretch occupies residues 129-140 (WALAQGNWIWGY).

As to quaternary structure, heterotrimer of 3 subunits, CdtA, CdtB and CdtC.

Its subcellular location is the cell outer membrane. Its function is as follows. CDTs are cytotoxins which induce cell distension, growth arrest in G2/M phase, nucleus swelling, and chromatin fragmentation in HeLa cells. The sequence is that of Cytolethal distending toxin subunit A (cdtA) from Campylobacter jejuni subsp. jejuni serotype O:2 (strain ATCC 700819 / NCTC 11168).